A 431-amino-acid chain; its full sequence is Ribosomal protein uS12 methylthiotransferase RimO (431 aa).

The MTTase N-terminal domain maps to 4–120; sequence HKLFLLSLGC…ILAALGAAYH (117 aa). Cys-13, Cys-49, Cys-83, Cys-144, Cys-148, and Cys-151 together coordinate [4Fe-4S] cluster. In terms of domain architecture, Radical SAM core spans 130-359; the sequence is LTPPHYTYLK…MELQESVSQD (230 aa). A TRAM domain is found at 362–429; it reads RDFEGKEITV…PFDLVGEVIG (68 aa).

This sequence belongs to the methylthiotransferase family. RimO subfamily. Requires [4Fe-4S] cluster as cofactor.

Its subcellular location is the cytoplasm. The catalysed reaction is L-aspartate(89)-[ribosomal protein uS12]-hydrogen + (sulfur carrier)-SH + AH2 + 2 S-adenosyl-L-methionine = 3-methylsulfanyl-L-aspartate(89)-[ribosomal protein uS12]-hydrogen + (sulfur carrier)-H + 5'-deoxyadenosine + L-methionine + A + S-adenosyl-L-homocysteine + 2 H(+). In terms of biological role, catalyzes the methylthiolation of an aspartic acid residue of ribosomal protein uS12. The polypeptide is Ribosomal protein uS12 methylthiotransferase RimO (Pelodictyon phaeoclathratiforme (strain DSM 5477 / BU-1)).